We begin with the raw amino-acid sequence, 310 residues long: Aspartate carbamoyltransferase catalytic subunit (310 aa).

Arginine 58 and threonine 59 together coordinate carbamoyl phosphate. Lysine 86 is an L-aspartate binding site. Carbamoyl phosphate is bound by residues arginine 108, histidine 136, and glutamine 139. Residues arginine 169 and arginine 224 each coordinate L-aspartate. Positions 265 and 266 each coordinate carbamoyl phosphate.

This sequence belongs to the aspartate/ornithine carbamoyltransferase superfamily. ATCase family. Heterododecamer (2C3:3R2) of six catalytic PyrB chains organized as two trimers (C3), and six regulatory PyrI chains organized as three dimers (R2).

It carries out the reaction carbamoyl phosphate + L-aspartate = N-carbamoyl-L-aspartate + phosphate + H(+). The protein operates within pyrimidine metabolism; UMP biosynthesis via de novo pathway; (S)-dihydroorotate from bicarbonate: step 2/3. In terms of biological role, catalyzes the condensation of carbamoyl phosphate and aspartate to form carbamoyl aspartate and inorganic phosphate, the committed step in the de novo pyrimidine nucleotide biosynthesis pathway. The polypeptide is Aspartate carbamoyltransferase catalytic subunit (Trichlorobacter lovleyi (strain ATCC BAA-1151 / DSM 17278 / SZ) (Geobacter lovleyi)).